A 503-amino-acid chain; its full sequence is Maturase K (503 aa).

It belongs to the intron maturase 2 family. MatK subfamily.

It is found in the plastid. It localises to the chloroplast. Functionally, usually encoded in the trnK tRNA gene intron. Probably assists in splicing its own and other chloroplast group II introns. The protein is Maturase K of Syzygium anisatum (Aniseed myrtle).